The following is a 360-amino-acid chain: Peptide chain release factor 1 (360 aa).

The residue at position 236 (Q236) is an N5-methylglutamine.

Belongs to the prokaryotic/mitochondrial release factor family. Methylated by PrmC. Methylation increases the termination efficiency of RF1.

The protein localises to the cytoplasm. Its function is as follows. Peptide chain release factor 1 directs the termination of translation in response to the peptide chain termination codons UAG and UAA. This chain is Peptide chain release factor 1, found in Limosilactobacillus fermentum (strain NBRC 3956 / LMG 18251) (Lactobacillus fermentum).